A 176-amino-acid chain; its full sequence is NAD(P)H-quinone oxidoreductase subunit 6, chloroplastic (176 aa).

A run of 5 helical transmembrane segments spans residues 10–30, 32–52, 61–81, 92–112, and 152–172; these read FLLV…VLLP, PIYS…FYIL, AQLL…VMFM, LWTV…ISLI, and FFLP…GAIA.

Belongs to the complex I subunit 6 family. In terms of assembly, NDH is composed of at least 16 different subunits, 5 of which are encoded in the nucleus.

The protein localises to the plastid. It is found in the chloroplast thylakoid membrane. It carries out the reaction a plastoquinone + NADH + (n+1) H(+)(in) = a plastoquinol + NAD(+) + n H(+)(out). The enzyme catalyses a plastoquinone + NADPH + (n+1) H(+)(in) = a plastoquinol + NADP(+) + n H(+)(out). In terms of biological role, NDH shuttles electrons from NAD(P)H:plastoquinone, via FMN and iron-sulfur (Fe-S) centers, to quinones in the photosynthetic chain and possibly in a chloroplast respiratory chain. The immediate electron acceptor for the enzyme in this species is believed to be plastoquinone. Couples the redox reaction to proton translocation, and thus conserves the redox energy in a proton gradient. In Solanum bulbocastanum (Wild potato), this protein is NAD(P)H-quinone oxidoreductase subunit 6, chloroplastic (ndhG).